Here is a 336-residue protein sequence, read N- to C-terminus: Protein phosphatase 1 regulatory subunit pprA (336 aa).

Residues 1 to 10 (MSEQNTIINS) show a composition bias toward low complexity. The disordered stretch occupies residues 1–24 (MSEQNTIINSEEIKENEKIESETE). Basic and acidic residues predominate over residues 11 to 21 (EEIKENEKIES). LRR repeat units follow at residues 26–47 (PITY…YNIP), 49–70 (TLLD…NHLK), 71–92 (NLKK…DQLK), 93–114 (ELES…KDFQ), 115–136 (SLTY…SIKD), 139–160 (KIKE…QELV), 161–182 (PIKN…ENLV), 183–204 (NIET…NHLS), 205–225 (HLRI…KGLV), 229–250 (CLEE…QSLK), 251–272 (QLRT…NELP), and 273–294 (DLDE…EQQV). An LRRCT domain is found at 306 to 336 (NPVATHVQYRRMFINMFPQLKQLDATMVKRN).

It belongs to the SDS22 family.

It localises to the nucleus. Functionally, regulatory subunit of protein phosphatase 1. In Dictyostelium discoideum (Social amoeba), this protein is Protein phosphatase 1 regulatory subunit pprA (pprA).